Consider the following 310-residue polypeptide: Vomeronasal type-1 receptor 3 (310 aa).

The Extracellular portion of the chain corresponds to 1-5 (MASKD). Residues 6-26 (FAIGMILSQIMVGFLGNFFLL) form a helical membrane-spanning segment. Residues 27–50 (YHYSFLHFTRGMLQSTDLTLKHLT) are Cytoplasmic-facing. A helical transmembrane segment spans residues 51–71 (IANSLVILSKGIPQTMAAFGL). Topologically, residues 72–91 (KDSLSDIGCKFVFYVHRVGR) are extracellular. A helical transmembrane segment spans residues 92–112 (AVCTGNACLLSVFQVITISSS). Topologically, residues 113 to 129 (EFRWAELKLHAHKYIRS) are cytoplasmic. The helical transmembrane segment at 130–150 (FILVLCWILNTLVNITVPLHV) threads the bilayer. The Extracellular portion of the chain corresponds to 151–186 (TGKWNSINSTKTNDYGYCSGGSRSRIPHSLHIVLLS). A glycan (N-linked (GlcNAc...) asparagine) is linked at Asn-158. A helical membrane pass occupies residues 187–207 (SLDVLCLGLMTLASGSMVFIL). The Cytoplasmic segment spans residues 208 to 235 (HRLKQQVQHIHGTNLSPRSSPESRVTQS). The chain crosses the membrane as a helical span at residues 236 to 258 (ILVLVSTLCYFTRSPPSLHMSLF). Over 259-263 (PNPSW) the chain is Extracellular. The helical transmembrane segment at 264-284 (WPLNASALITACFPTVSPFVL) threads the bilayer. Residues 285–310 (MSRHPRIPRLGSACCGRNPQFPKLVR) lie on the Cytoplasmic side of the membrane.

This sequence belongs to the G-protein coupled receptor 1 family.

Its subcellular location is the cell membrane. In terms of biological role, putative pheromone receptor. The chain is Vomeronasal type-1 receptor 3 (VN1R3) from Pan troglodytes (Chimpanzee).